The sequence spans 682 residues: Heat shock 70 kDa protein 10, mitochondrial (682 aa).

A mitochondrion-targeting transit peptide spans 1–50; sequence MATAALLRSIRRREVVSSPFSAYRCLSSSGKASLNSSYLGQNFRSFSRAF. The tract at residues 646-682 is disordered; it reads KIGEHMSGGSGGGSAPGGGSEGGSDQAPEAEYEEVKK. Gly residues predominate over residues 651–667; it reads MSGGSGGGSAPGGGSEG. Positions 673 to 682 are enriched in acidic residues; that stretch reads PEAEYEEVKK.

The protein belongs to the heat shock protein 70 (TC 1.A.33) family. DnaK subfamily.

It localises to the mitochondrion. Chaperone involved in the maturation of iron-sulfur [Fe-S] cluster-containing proteins. Has a low intrinsic ATPase activity which is markedly stimulated by HSCB and ISU1. In cooperation with other chaperones, Hsp70s are key components that facilitate folding of de novo synthesized proteins, assist translocation of precursor proteins into organelles, and are responsible for degradation of damaged protein under stress conditions. The sequence is that of Heat shock 70 kDa protein 10, mitochondrial from Arabidopsis thaliana (Mouse-ear cress).